The chain runs to 123 residues: Protein TraJ (123 aa).

As to quaternary structure, monomer.

The protein resides in the cytoplasm. Functionally, transfer of plasmid RP4 during bacterial conjugation requires the plasmid-encoded TraJ protein, which binds to a 19-base pair invert sequence repetition within the transfer origin. TraJ protein is bound to only one side of the DNA helix. This nucleoprotein structure is the initial complex in the pathway to assemble a functional relaxosome. The polypeptide is Protein TraJ (traJ) (Escherichia coli).